Consider the following 415-residue polypeptide: Granaticin polyketide putative beta-ketoacyl synthase 2 (415 aa).

The Ketosynthase family 3 (KS3) domain maps to 6–406 (RRRAVVTGLS…GFNSAVVVTL (401 aa)).

Belongs to the thiolase-like superfamily. Beta-ketoacyl-ACP synthases family.

It participates in antibiotic biosynthesis; granaticin biosynthesis. The polypeptide is Granaticin polyketide putative beta-ketoacyl synthase 2 (gra-orf2) (Streptomyces violaceoruber).